The following is a 56-amino-acid chain: GSICLEPKVVGPCKAGIRRFYFDSETGKCTLFLYGGCKGNGNNFETLHACRAICRA.

The 51-residue stretch at 4-54 folds into the BPTI/Kunitz inhibitor domain; it reads CLEPKVVGPCKAGIRRFYFDSETGKCTLFLYGGCKGNGNNFETLHACRAIC. Disulfide bonds link Cys-4-Cys-54, Cys-13-Cys-37, and Cys-29-Cys-50.

It belongs to the venom Kunitz-type family. Sea anemone type 2 potassium channel toxin subfamily. Contains three disulfide bonds.

It is found in the secreted. The protein localises to the nematocyst. In terms of biological role, serine protease inhibitor. The chain is PI-stichotoxin-Hmg3b from Heteractis magnifica (Magnificent sea anemone).